A 129-amino-acid polypeptide reads, in one-letter code: Small ribosomal subunit protein uS11 (129 aa).

The protein belongs to the universal ribosomal protein uS11 family. Part of the 30S ribosomal subunit. Interacts with proteins S7 and S18. Binds to IF-3.

Functionally, located on the platform of the 30S subunit, it bridges several disparate RNA helices of the 16S rRNA. Forms part of the Shine-Dalgarno cleft in the 70S ribosome. This is Small ribosomal subunit protein uS11 from Paracoccus denitrificans (strain Pd 1222).